The following is a 94-amino-acid chain: Large ribosomal subunit protein bL25 (94 aa).

The protein belongs to the bacterial ribosomal protein bL25 family. In terms of assembly, part of the 50S ribosomal subunit; part of the 5S rRNA/L5/L18/L25 subcomplex. Contacts the 5S rRNA. Binds to the 5S rRNA independently of L5 and L18.

Functionally, this is one of the proteins that binds to the 5S RNA in the ribosome where it forms part of the central protuberance. The sequence is that of Large ribosomal subunit protein bL25 from Sodalis glossinidius (strain morsitans).